Here is a 272-residue protein sequence, read N- to C-terminus: Indole-3-glycerol phosphate synthase (272 aa).

This sequence belongs to the TrpC family.

It carries out the reaction 1-(2-carboxyphenylamino)-1-deoxy-D-ribulose 5-phosphate + H(+) = (1S,2R)-1-C-(indol-3-yl)glycerol 3-phosphate + CO2 + H2O. It functions in the pathway amino-acid biosynthesis; L-tryptophan biosynthesis; L-tryptophan from chorismate: step 4/5. The protein is Indole-3-glycerol phosphate synthase of Mycobacterium ulcerans (strain Agy99).